Consider the following 430-residue polypeptide: Trigger factor (430 aa).

Positions 163–248 (GNIAIIDFKG…IKDIKVKELP (86 aa)) constitute a PPIase FKBP-type domain.

Belongs to the FKBP-type PPIase family. Tig subfamily.

It is found in the cytoplasm. The enzyme catalyses [protein]-peptidylproline (omega=180) = [protein]-peptidylproline (omega=0). In terms of biological role, involved in protein export. Acts as a chaperone by maintaining the newly synthesized protein in an open conformation. Functions as a peptidyl-prolyl cis-trans isomerase. The chain is Trigger factor from Clostridium botulinum (strain Kyoto / Type A2).